A 393-amino-acid polypeptide reads, in one-letter code: Myb-related transcription factor, partner of profilin (393 aa).

A compositionally biased stretch (low complexity) spans 1 to 11; the sequence is MASATAAAAPG. The segment at 1–21 is disordered; it reads MASATAAAAPGEAEETTRLRK. Residues 16–88 form the Myb-like domain; that stretch reads TTRLRKPRFS…EVQKRWNDFK (73 aa). A Nuclear localization signal motif is present at residues 87-90; it reads FKRR. Disordered stretches follow at residues 125 to 254, 290 to 323, and 348 to 393; these read GPGV…EQSL, PLLPGTPADPLPPPPPPPPPPPPKPVLPPSAPKV, and IISP…WKSP. The segment covering 142–157 has biased composition (low complexity); that stretch reads AAASSQPQASTASTQR. Positions 160-171 are enriched in basic and acidic residues; the sequence is LSEDRRQDRRAD. Residues 173–184 are compositionally biased toward polar residues; that stretch reads PAQSKGGSSSPE. 4 stretches are compositionally biased toward pro residues: residues 219–229, 238–247, 296–320, and 359–368; these read PPLPAPPPPPT, SPSPTPPRPT, PADPLPPPPPPPPPPPPKPVLPPSA, and KPLPPAPPLP. Basic residues predominate over residues 375 to 393; it reads HKRRKGFPTRKRRGRWKSP. 2 short sequence motifs (nuclear localization signal) span residues 376-379 and 384-387; these read KRRK and RKRR.

As to quaternary structure, interacts with PFN1. Homodimer and heterodimer with PFN1. Ubiquitous. Highly expressed in brain, liver and testis. Moderate expression in heart, lung and skeletal muscle. Low expression in spleen and kidney.

It is found in the nucleus. Transcriptional repressor; DNA-binding protein that specifically recognizes the core sequence 5'-YAAC[GT]G-3'. Dimerization with PFN1 reduces its DNA-binding capacity. The sequence is that of Myb-related transcription factor, partner of profilin (Mypop) from Mus musculus (Mouse).